We begin with the raw amino-acid sequence, 572 residues long: Methionine--tRNA ligase (572 aa).

A 'HIGH' region motif is present at residues 11-21 (PYINGIKHLGN). The Zn(2+) site is built by Cys143, Cys146, Cys156, and Cys159. Residues 346–350 (QFSTS) carry the 'KMSKS' region motif. Thr349 is an ATP binding site.

The protein belongs to the class-I aminoacyl-tRNA synthetase family. MetG type 1 subfamily. As to quaternary structure, monomer. The cofactor is Zn(2+).

The protein localises to the cytoplasm. It carries out the reaction tRNA(Met) + L-methionine + ATP = L-methionyl-tRNA(Met) + AMP + diphosphate. In terms of biological role, is required not only for elongation of protein synthesis but also for the initiation of all mRNA translation through initiator tRNA(fMet) aminoacylation. This is Methionine--tRNA ligase from Cereibacter sphaeroides (strain ATCC 17029 / ATH 2.4.9) (Rhodobacter sphaeroides).